A 165-amino-acid polypeptide reads, in one-letter code: Shikimate kinase (165 aa).

11–16 contacts ATP; it reads GAGKTT. Position 15 (T15) interacts with Mg(2+). Positions 33, 57, and 78 each coordinate substrate. R116 is an ATP binding site. R134 is a substrate binding site.

The protein belongs to the shikimate kinase family. Monomer. Mg(2+) serves as cofactor.

It is found in the cytoplasm. It carries out the reaction shikimate + ATP = 3-phosphoshikimate + ADP + H(+). It participates in metabolic intermediate biosynthesis; chorismate biosynthesis; chorismate from D-erythrose 4-phosphate and phosphoenolpyruvate: step 5/7. Catalyzes the specific phosphorylation of the 3-hydroxyl group of shikimic acid using ATP as a cosubstrate. The chain is Shikimate kinase from Bacillus mycoides (strain KBAB4) (Bacillus weihenstephanensis).